The primary structure comprises 399 residues: Methylthioribose kinase (399 aa).

ATP contacts are provided by residues asparagine 40, lysine 57, and 111–113 (EDL). Aspartate 229 lines the substrate pocket. 246-248 (DAE) is an ATP binding site. Arginine 344 is a binding site for substrate.

This sequence belongs to the methylthioribose kinase family. As to quaternary structure, homodimer.

The catalysed reaction is 5-(methylsulfanyl)-D-ribose + ATP = 5-(methylsulfanyl)-alpha-D-ribose 1-phosphate + ADP + H(+). It participates in amino-acid biosynthesis; L-methionine biosynthesis via salvage pathway; S-methyl-5-thio-alpha-D-ribose 1-phosphate from S-methyl-5'-thioadenosine (hydrolase route): step 2/2. Functionally, catalyzes the phosphorylation of methylthioribose into methylthioribose-1-phosphate. This Enterobacter sp. (strain 638) protein is Methylthioribose kinase.